The primary structure comprises 511 residues: Cytochrome P450 714C3 (511 aa).

The Lumenal portion of the chain corresponds to 1 to 6 (MEKLLA). A helical; Signal-anchor for type III membrane protein membrane pass occupies residues 7 to 27 (LIVVLVILLSLALFYLCNILW). The Cytoplasmic segment spans residues 28-511 (LRAVKIRKKL…GLPLMVTKLP (484 aa)). Cys-458 provides a ligand contact to heme.

Belongs to the cytochrome P450 family. It depends on heme as a cofactor.

Its subcellular location is the membrane. This Oryza sativa subsp. japonica (Rice) protein is Cytochrome P450 714C3 (CYP714C3).